The sequence spans 553 residues: Dihydroxy-acid dehydratase (553 aa).

Mg(2+) is bound at residue Asp78. Cys119 serves as a coordination point for [2Fe-2S] cluster. 2 residues coordinate Mg(2+): Asp120 and Lys121. Lys121 carries the post-translational modification N6-carboxylysine. A [2Fe-2S] cluster-binding site is contributed by Cys193. A Mg(2+)-binding site is contributed by Glu441. The active-site Proton acceptor is the Ser467.

This sequence belongs to the IlvD/Edd family. In terms of assembly, homodimer. [2Fe-2S] cluster serves as cofactor. Requires Mg(2+) as cofactor.

The catalysed reaction is (2R)-2,3-dihydroxy-3-methylbutanoate = 3-methyl-2-oxobutanoate + H2O. It carries out the reaction (2R,3R)-2,3-dihydroxy-3-methylpentanoate = (S)-3-methyl-2-oxopentanoate + H2O. The protein operates within amino-acid biosynthesis; L-isoleucine biosynthesis; L-isoleucine from 2-oxobutanoate: step 3/4. It participates in amino-acid biosynthesis; L-valine biosynthesis; L-valine from pyruvate: step 3/4. Functionally, functions in the biosynthesis of branched-chain amino acids. Catalyzes the dehydration of (2R,3R)-2,3-dihydroxy-3-methylpentanoate (2,3-dihydroxy-3-methylvalerate) into 2-oxo-3-methylpentanoate (2-oxo-3-methylvalerate) and of (2R)-2,3-dihydroxy-3-methylbutanoate (2,3-dihydroxyisovalerate) into 2-oxo-3-methylbutanoate (2-oxoisovalerate), the penultimate precursor to L-isoleucine and L-valine, respectively. This chain is Dihydroxy-acid dehydratase, found in Geotalea daltonii (strain DSM 22248 / JCM 15807 / FRC-32) (Geobacter daltonii).